The sequence spans 326 residues: MAFISFPPRHPSSSARLPLTLIALDDWALSTITGVDSEKYIQGQVTADVSQMTEQQHLLAAHCDAKGKMWSTLRLFRERDGFAWIERRSVLEAQLTELKKYAVFSKVVIAPDDERVLLGVAGFQARAALANVFSVLPNSENQVVRDGASTLLWFEHPAERFLLVTDVATANMLTEKLHGEAELNNSQQWLALDIEAGIPAIDAANSGQFIPQATNLQALGGISFKKGCYTGQEMVARAKFRGANKRALWLLAGKASRVPEAGEDLELQMGENWRRTGAILAATQLDDGQLLVQAVMNNDLEAESVFRVRDDANTLHIVPLPYSLEE.

The folate site is built by tryptophan 27 and tryptophan 189.

It belongs to the tRNA-modifying YgfZ family.

It localises to the cytoplasm. Its function is as follows. Folate-binding protein involved in regulating the level of ATP-DnaA and in the modification of some tRNAs. It is probably a key factor in regulatory networks that act via tRNA modification, such as initiation of chromosomal replication. This is tRNA-modifying protein YgfZ from Salmonella paratyphi C (strain RKS4594).